Reading from the N-terminus, the 581-residue chain is Transcription factor GTE2 (581 aa).

The tract at residues V130–D153 is disordered. Over residues K131 to K145 the composition is skewed to basic residues. The 107-residue stretch at K169–T275 folds into the Bromo domain. Disordered stretches follow at residues P329–M399 and K470–P581. Positions P346 to P365 are enriched in pro residues. Residues P389–K470 form the NET domain. Basic and acidic residues-rich tracts occupy residues K390–M399 and S493–E503. Residues A504–V517 show a composition bias toward acidic residues. The span at T530 to D564 shows a compositional bias: low complexity.

Its subcellular location is the nucleus. The polypeptide is Transcription factor GTE2 (GTE2) (Arabidopsis thaliana (Mouse-ear cress)).